The chain runs to 126 residues: Lymphocyte antigen 6 complex locus protein G6c (126 aa).

The N-terminal stretch at 1–19 is a signal peptide; that stretch reads MKHLLLLTLSALLYCWVSA. The region spanning 21–112 is the UPAR/Ly6 domain; it reads TRCHSCYKVP…PRPTPALALI (92 aa). 3 disulfide bridges follow: cysteine 23/cysteine 48, cysteine 26/cysteine 34, and cysteine 40/cysteine 66. The N-linked (GlcNAc...) (high mannose) asparagine glycan is linked to asparagine 89. A disulfide bond links cysteine 93 and cysteine 98. Serine 100 carries the GPI-anchor amidated serine lipid modification. Residues 101–126 constitute a propeptide, removed in mature form; that stretch reads PAPRPTPALALISLTSLAGLGLWLLH.

As to quaternary structure, monomer. Post-translationally, N-glycosylated. In terms of tissue distribution, highly expressed at the leading edges of cells, on filopodia.

The protein resides in the cell membrane. The protein is Lymphocyte antigen 6 complex locus protein G6c (Ly6g6c) of Mus musculus (Mouse).